A 117-amino-acid polypeptide reads, in one-letter code: Large ribosomal subunit protein uL18 (117 aa).

This sequence belongs to the universal ribosomal protein uL18 family. As to quaternary structure, part of the 50S ribosomal subunit; part of the 5S rRNA/L5/L18/L25 subcomplex. Contacts the 5S and 23S rRNAs.

This is one of the proteins that bind and probably mediate the attachment of the 5S RNA into the large ribosomal subunit, where it forms part of the central protuberance. The sequence is that of Large ribosomal subunit protein uL18 from Pasteurella multocida (strain Pm70).